A 177-amino-acid polypeptide reads, in one-letter code: ATP synthase subunit delta (177 aa).

Belongs to the ATPase delta chain family. F-type ATPases have 2 components, F(1) - the catalytic core - and F(0) - the membrane proton channel. F(1) has five subunits: alpha(3), beta(3), gamma(1), delta(1), epsilon(1). F(0) has three main subunits: a(1), b(2) and c(10-14). The alpha and beta chains form an alternating ring which encloses part of the gamma chain. F(1) is attached to F(0) by a central stalk formed by the gamma and epsilon chains, while a peripheral stalk is formed by the delta and b chains.

It localises to the cell inner membrane. In terms of biological role, f(1)F(0) ATP synthase produces ATP from ADP in the presence of a proton or sodium gradient. F-type ATPases consist of two structural domains, F(1) containing the extramembraneous catalytic core and F(0) containing the membrane proton channel, linked together by a central stalk and a peripheral stalk. During catalysis, ATP synthesis in the catalytic domain of F(1) is coupled via a rotary mechanism of the central stalk subunits to proton translocation. This protein is part of the stalk that links CF(0) to CF(1). It either transmits conformational changes from CF(0) to CF(1) or is implicated in proton conduction. This Edwardsiella ictaluri (strain 93-146) protein is ATP synthase subunit delta.